A 261-amino-acid polypeptide reads, in one-letter code: Ribosomal RNA small subunit methyltransferase G (261 aa).

S-adenosyl-L-methionine is bound by residues Gly-94, Leu-99, Glu-117–Thr-119, Val-145–Glu-146, and Arg-164.

The protein belongs to the methyltransferase superfamily. RNA methyltransferase RsmG family.

It localises to the cytoplasm. Its function is as follows. Specifically methylates the N7 position of a guanine in 16S rRNA. This Rubrobacter xylanophilus (strain DSM 9941 / JCM 11954 / NBRC 16129 / PRD-1) protein is Ribosomal RNA small subunit methyltransferase G.